A 554-amino-acid chain; its full sequence is Hedycaryol synthase (554 aa).

Residues Arg270, Asp307, Asp311, Arg449, and Asp452 each contribute to the (2E,6E)-farnesyl diphosphate site. Residues Asp307 and Asp311 each coordinate Mg(2+). Residues Asp307 to Asp311 carry the DDXXD motif motif. Mg(2+) contacts are provided by Asp452, Ser456, and Glu460.

This sequence belongs to the terpene synthase family. Mg(2+) is required as a cofactor. In terms of tissue distribution, specifically expressed in flowers.

The enzyme catalyses (2E,6E)-farnesyl diphosphate + H2O = (2E,6E)-hedycaryol + diphosphate. It functions in the pathway secondary metabolite biosynthesis; terpenoid biosynthesis. Sesquiterpene synthase that catalyzes the formation of sesquiterpenes and sesquiterpenoid alcohols. Converts farnesyl diphosphate (FPP) to hedycaryol. Hedycaryol is likely to be one of the terpenes that attract insects for pollination of Camellia brevistyla. This is Hedycaryol synthase from Camellia brevistyla.